The following is a 702-amino-acid chain: Polyribonucleotide nucleotidyltransferase (702 aa).

Residues Asp485 and Asp491 each contribute to the Mg(2+) site. The KH domain occupies 552–611; it reads PKTSTLQIDPEKIRDVIGAGGKVINKIIADTGVKIDIKEDGLVYVSSAESEGVKEAVKII. The S1 motif domain maps to 621-689; that stretch reads GEIYLGKVTK…SQGRINLSRK (69 aa).

Belongs to the polyribonucleotide nucleotidyltransferase family. The cofactor is Mg(2+).

It localises to the cytoplasm. It carries out the reaction RNA(n+1) + phosphate = RNA(n) + a ribonucleoside 5'-diphosphate. Its function is as follows. Involved in mRNA degradation. Catalyzes the phosphorolysis of single-stranded polyribonucleotides processively in the 3'- to 5'-direction. The polypeptide is Polyribonucleotide nucleotidyltransferase (Clostridium perfringens (strain ATCC 13124 / DSM 756 / JCM 1290 / NCIMB 6125 / NCTC 8237 / Type A)).